The sequence spans 105 residues: uncharacterized protein (105 aa).

The protein belongs to the asfivirus C122R family.

The protein resides in the virion. This is an uncharacterized protein from African swine fever virus (strain Badajoz 1971 Vero-adapted) (Ba71V).